We begin with the raw amino-acid sequence, 534 residues long: Membrane protein insertase YidC (534 aa).

5 helical membrane passes run 7 to 27 (IIAVVLSFIVLVGWGYLSEYM), 319 to 339 (AIDLGWFGFIARPLVTLLDFF), 342 to 362 (YVGNYGTAIILLTILIKLVFW), 413 to 433 (GGCLPMLVQIPVFFGLYQALL), and 493 to 513 (VMMFMPVVFTFLFLNFPSGLV).

Belongs to the OXA1/ALB3/YidC family. Type 1 subfamily. In terms of assembly, interacts with the Sec translocase complex via SecD. Specifically interacts with transmembrane segments of nascent integral membrane proteins during membrane integration.

The protein resides in the cell inner membrane. Its function is as follows. Required for the insertion and/or proper folding and/or complex formation of integral membrane proteins into the membrane. Involved in integration of membrane proteins that insert both dependently and independently of the Sec translocase complex, as well as at least some lipoproteins. Aids folding of multispanning membrane proteins. In Nitratidesulfovibrio vulgaris (strain ATCC 29579 / DSM 644 / CCUG 34227 / NCIMB 8303 / VKM B-1760 / Hildenborough) (Desulfovibrio vulgaris), this protein is Membrane protein insertase YidC.